A 218-amino-acid polypeptide reads, in one-letter code: Large ribosomal subunit protein bL25 (218 aa).

Disordered stretches follow at residues 1–20 (MKTH…GPAR) and 185–218 (PTAA…ASEE). Over residues 192-218 (EEGEEGEEGEEGGEGGEAEGAEAASEE) the composition is skewed to acidic residues.

This sequence belongs to the bacterial ribosomal protein bL25 family. CTC subfamily. Part of the 50S ribosomal subunit; part of the 5S rRNA/L5/L18/L25 subcomplex. Contacts the 5S rRNA. Binds to the 5S rRNA independently of L5 and L18.

In terms of biological role, this is one of the proteins that binds to the 5S RNA in the ribosome where it forms part of the central protuberance. This chain is Large ribosomal subunit protein bL25, found in Desulfatibacillum aliphaticivorans.